The following is a 520-amino-acid chain: Probable glycine dehydrogenase (decarboxylating) subunit 2 (520 aa).

The interval 1–29 is disordered; the sequence is MWRQSRWNEPLITEMSRRGRRGALPPRPD. The residue at position 279 (lysine 279) is an N6-(pyridoxal phosphate)lysine.

This sequence belongs to the GcvP family. C-terminal subunit subfamily. In terms of assembly, the glycine cleavage system is composed of four proteins: P, T, L and H. In this organism, the P 'protein' is a heterodimer of two subunits. Pyridoxal 5'-phosphate serves as cofactor.

It catalyses the reaction N(6)-[(R)-lipoyl]-L-lysyl-[glycine-cleavage complex H protein] + glycine + H(+) = N(6)-[(R)-S(8)-aminomethyldihydrolipoyl]-L-lysyl-[glycine-cleavage complex H protein] + CO2. Its function is as follows. The glycine cleavage system catalyzes the degradation of glycine. The P protein binds the alpha-amino group of glycine through its pyridoxal phosphate cofactor; CO(2) is released and the remaining methylamine moiety is then transferred to the lipoamide cofactor of the H protein. The chain is Probable glycine dehydrogenase (decarboxylating) subunit 2 from Aeropyrum pernix (strain ATCC 700893 / DSM 11879 / JCM 9820 / NBRC 100138 / K1).